The primary structure comprises 431 residues: MKQYIPIESVFAREILDSRGNPTVEVEVIAEGGFIGRASVPSGASTGAFEAVELRDENSGRYMGKGVETAVDNVNNTIAPEVEGMNVFDQVAVDKLMIDLDGTPNKERLGANAILGVSLAVAKAAAEALGLGLYQYIGGVNAKTLPVPMMNIINGGKHADNSVNIQEFMIMPVGAENFKEALRMCAEVFHNLKKVLHSKGLSTAVGDEGGFAPNLETDEQAIQVILEAVEKAGYKPGNDFRIAIDAAATEMYQEDGSYFFWKSNIRKSKEEMVDYWADLAGKYPIISLEDGVSEEDWEGWKLLTERLGSKIQLVGDDLFVTNTKRLEKGIKQGVANSILIKVNQIGTLTETLDAIQMANRAGYTAVTSHRSGETEDATIADIAVATNSGQIKTGAPSRTDRVAKYNQLLRIEEELGEVAEFPGLKAWYNLK.

A (2R)-2-phosphoglycerate-binding site is contributed by Gln166. The active-site Proton donor is Glu208. Mg(2+)-binding residues include Asp245, Glu289, and Asp316. Residues Lys341, Arg370, Ser371, and Lys392 each contribute to the (2R)-2-phosphoglycerate site. Residue Lys341 is the Proton acceptor of the active site.

The protein belongs to the enolase family. Mg(2+) serves as cofactor.

It localises to the cytoplasm. It is found in the secreted. The protein localises to the cell surface. It carries out the reaction (2R)-2-phosphoglycerate = phosphoenolpyruvate + H2O. The protein operates within carbohydrate degradation; glycolysis; pyruvate from D-glyceraldehyde 3-phosphate: step 4/5. Catalyzes the reversible conversion of 2-phosphoglycerate (2-PG) into phosphoenolpyruvate (PEP). It is essential for the degradation of carbohydrates via glycolysis. This is Enolase from Ruminiclostridium cellulolyticum (strain ATCC 35319 / DSM 5812 / JCM 6584 / H10) (Clostridium cellulolyticum).